Here is a 194-residue protein sequence, read N- to C-terminus: Holliday junction branch migration complex subunit RuvA (194 aa).

Residues 1-64 (MISRLTGKLV…EDAHLLFGFA (64 aa)) are domain I. Positions 65-143 (TAEERKTFRQ…AHTVTDGLFA (79 aa)) are domain II. The tract at residues 144 to 147 (AAPA) is flexible linker. A domain III region spans residues 147 to 194 (AADETEDIVSTLLALGYSEREAKAAVKGVPEGTDVGEGVRLALKNLLK).

Belongs to the RuvA family. Homotetramer. Forms an RuvA(8)-RuvB(12)-Holliday junction (HJ) complex. HJ DNA is sandwiched between 2 RuvA tetramers; dsDNA enters through RuvA and exits via RuvB. An RuvB hexamer assembles on each DNA strand where it exits the tetramer. Each RuvB hexamer is contacted by two RuvA subunits (via domain III) on 2 adjacent RuvB subunits; this complex drives branch migration. In the full resolvosome a probable DNA-RuvA(4)-RuvB(12)-RuvC(2) complex forms which resolves the HJ.

Its subcellular location is the cytoplasm. Its function is as follows. The RuvA-RuvB-RuvC complex processes Holliday junction (HJ) DNA during genetic recombination and DNA repair, while the RuvA-RuvB complex plays an important role in the rescue of blocked DNA replication forks via replication fork reversal (RFR). RuvA specifically binds to HJ cruciform DNA, conferring on it an open structure. The RuvB hexamer acts as an ATP-dependent pump, pulling dsDNA into and through the RuvAB complex. HJ branch migration allows RuvC to scan DNA until it finds its consensus sequence, where it cleaves and resolves the cruciform DNA. The chain is Holliday junction branch migration complex subunit RuvA from Neisseria meningitidis serogroup B (strain ATCC BAA-335 / MC58).